Consider the following 156-residue polypeptide: ATP synthase subunit b (156 aa).

The chain crosses the membrane as a helical span at residues 7-29 (LLGQAISFALFVWFCMKYVWPPL).

This sequence belongs to the ATPase B chain family. F-type ATPases have 2 components, F(1) - the catalytic core - and F(0) - the membrane proton channel. F(1) has five subunits: alpha(3), beta(3), gamma(1), delta(1), epsilon(1). F(0) has three main subunits: a(1), b(2) and c(10-14). The alpha and beta chains form an alternating ring which encloses part of the gamma chain. F(1) is attached to F(0) by a central stalk formed by the gamma and epsilon chains, while a peripheral stalk is formed by the delta and b chains.

The protein localises to the cell inner membrane. In terms of biological role, f(1)F(0) ATP synthase produces ATP from ADP in the presence of a proton or sodium gradient. F-type ATPases consist of two structural domains, F(1) containing the extramembraneous catalytic core and F(0) containing the membrane proton channel, linked together by a central stalk and a peripheral stalk. During catalysis, ATP synthesis in the catalytic domain of F(1) is coupled via a rotary mechanism of the central stalk subunits to proton translocation. Functionally, component of the F(0) channel, it forms part of the peripheral stalk, linking F(1) to F(0). The protein is ATP synthase subunit b of Vibrio parahaemolyticus serotype O3:K6 (strain RIMD 2210633).